A 399-amino-acid polypeptide reads, in one-letter code: Immunoglobulin heavy constant gamma 1 (399 aa).

A disordered region spans residues 1–21 (ASTKGPSVFPLAPSSKSTSGG). The segment at 1 to 98 (ASTKGPSVFP…PSNTKVDKKV (98 aa)) is CH1. The Extracellular portion of the chain corresponds to 1 to 350 (ASTKGPSVFP…DGELDGLWTT (350 aa)). Ig-like domains are found at residues 6–99 (PSVF…KKVE), 121–220 (PSVF…KTIS), and 229–325 (PQVY…KSLS). Cysteine 27 and cysteine 83 are joined by a disulfide. The segment at 99 to 110 (EPKSCDKTHTCP) is hinge. Positions 111–223 (PCPAPELLGG…PIEKTISKAK (113 aa)) are CH2. Intrachain disulfides connect cysteine 144/cysteine 204 and cysteine 250/cysteine 308. N-linked (GlcNAc...) (complex) asparagine glycosylation occurs at asparagine 180. The segment at 224–330 (GQPREPQVYT…QKSLSLSPEL (107 aa)) is CH3. Residues 351–371 (ITIFITLFLLSVCYSATVTFF) form a helical membrane-spanning segment. Residues 372–399 (KVKWIFSSVVDLKQTIIPDYRNMIGQGA) are Cytoplasmic-facing.

Immunoglobulins are composed of two identical heavy chains and two identical light chains; disulfide-linked. Interacts with FCGR1A; this interaction mediates IgG effector functions on monocytes. Interacts with FCGR2A and FCGR3A. Post-translationally, glycosylation on Asn-180 is required for interaction with Fc receptors and ability to activate the complement pathway. (Microbial infection) Deglycosylation on Asn-180 by S.pyogenes EndoS or Endos2 endoglucosidases prevents interaction between immunoglobulin-gamma (IgG) and Fc receptors, impairing ability to activate the complement pathway.

It is found in the secreted. The protein resides in the cell membrane. Functionally, constant region of immunoglobulin heavy chains. Immunoglobulins, also known as antibodies, are membrane-bound or secreted glycoproteins produced by B lymphocytes. In the recognition phase of humoral immunity, the membrane-bound immunoglobulins serve as receptors which, upon binding of a specific antigen, trigger the clonal expansion and differentiation of B lymphocytes into immunoglobulins-secreting plasma cells. Secreted immunoglobulins mediate the effector phase of humoral immunity, which results in the elimination of bound antigens. The antigen binding site is formed by the variable domain of one heavy chain, together with that of its associated light chain. Thus, each immunoglobulin has two antigen binding sites with remarkable affinity for a particular antigen. The variable domains are assembled by a process called V-(D)-J rearrangement and can then be subjected to somatic hypermutations which, after exposure to antigen and selection, allow affinity maturation for a particular antigen. Mediates IgG effector functions on monocytes triggering ADCC of virus-infected cells. The chain is Immunoglobulin heavy constant gamma 1 from Homo sapiens (Human).